The primary structure comprises 58 residues: MKIYKCAFCGADILPGYGIMYVKTDGTTLRFCSRKCFVSAVKFKRDPRRLAWVRKRQK.

Positions 6, 9, 32, and 36 each coordinate Zn(2+). A C4-type zinc finger spans residues 6 to 36 (CAFCGADILPGYGIMYVKTDGTTLRFCSRKC).

This sequence belongs to the eukaryotic ribosomal protein eL24 family. In terms of assembly, part of the 50S ribosomal subunit. Forms a cluster with proteins L3 and L14. The cofactor is Zn(2+).

In terms of biological role, binds to the 23S rRNA. The protein is Large ribosomal subunit protein eL24 of Pyrobaculum islandicum (strain DSM 4184 / JCM 9189 / GEO3).